The following is a 92-amino-acid chain: Probable Fe(2+)-trafficking protein (92 aa).

This sequence belongs to the Fe(2+)-trafficking protein family.

Functionally, could be a mediator in iron transactions between iron acquisition and iron-requiring processes, such as synthesis and/or repair of Fe-S clusters in biosynthetic enzymes. In Shewanella pealeana (strain ATCC 700345 / ANG-SQ1), this protein is Probable Fe(2+)-trafficking protein.